A 211-amino-acid polypeptide reads, in one-letter code: Thymidylate kinase (211 aa).

7–14 is an ATP binding site; it reads GIDGCGKT.

Belongs to the thymidylate kinase family.

The enzyme catalyses dTMP + ATP = dTDP + ADP. In terms of biological role, phosphorylation of dTMP to form dTDP in both de novo and salvage pathways of dTTP synthesis. The polypeptide is Thymidylate kinase (Anaplasma marginale (strain St. Maries)).